Reading from the N-terminus, the 306-residue chain is Ribosomal protein L11 methyltransferase (306 aa).

S-adenosyl-L-methionine-binding residues include Thr154, Gly179, Asp201, and Asn242.

This sequence belongs to the methyltransferase superfamily. PrmA family.

It localises to the cytoplasm. The catalysed reaction is L-lysyl-[protein] + 3 S-adenosyl-L-methionine = N(6),N(6),N(6)-trimethyl-L-lysyl-[protein] + 3 S-adenosyl-L-homocysteine + 3 H(+). Methylates ribosomal protein L11. This is Ribosomal protein L11 methyltransferase from Xylella fastidiosa (strain Temecula1 / ATCC 700964).